Reading from the N-terminus, the 81-residue chain is Cortexin-2 (81 aa).

Residues 29–49 (TGFAFVGILCIFLGLLIIRCF) traverse the membrane as a helical segment.

Belongs to the cortexin family.

Its subcellular location is the membrane. The protein is Cortexin-2 (Ctxn2) of Mus musculus (Mouse).